The chain runs to 246 residues: Chaperone protein SefB (246 aa).

A signal peptide spans 1–24 (MYILNKFIRRTVIFFFFCYLPIAS). Cysteines 124 and 155 form a disulfide.

This sequence belongs to the periplasmic pilus chaperone family.

It is found in the periplasm. Functionally, required for the biogenesis of the SefA (SEF14) fimbria. This Salmonella enteritidis protein is Chaperone protein SefB (sefB).